The following is a 598-amino-acid chain: Aspartate--tRNA(Asp/Asn) ligase (598 aa).

L-aspartate is bound at residue Glu-174. The tract at residues 198-201 is aspartate; that stretch reads QQLK. An L-aspartate-binding site is contributed by Arg-220. ATP-binding positions include 220-222 and Gln-229; that span reads RDE. Residue His-458 coordinates L-aspartate. Glu-492 contributes to the ATP binding site. Residue Arg-499 coordinates L-aspartate. 544–547 serves as a coordination point for ATP; it reads GIDR.

Belongs to the class-II aminoacyl-tRNA synthetase family. Type 1 subfamily. As to quaternary structure, homodimer.

Its subcellular location is the cytoplasm. The catalysed reaction is tRNA(Asx) + L-aspartate + ATP = L-aspartyl-tRNA(Asx) + AMP + diphosphate. In terms of biological role, aspartyl-tRNA synthetase with relaxed tRNA specificity since it is able to aspartylate not only its cognate tRNA(Asp) but also tRNA(Asn). Reaction proceeds in two steps: L-aspartate is first activated by ATP to form Asp-AMP and then transferred to the acceptor end of tRNA(Asp/Asn). The sequence is that of Aspartate--tRNA(Asp/Asn) ligase from Dehalococcoides mccartyi (strain ATCC BAA-2266 / KCTC 15142 / 195) (Dehalococcoides ethenogenes (strain 195)).